The primary structure comprises 158 residues: Transcription elongation factor GreA (158 aa).

A coiled-coil region spans residues 1 to 67 (MSNNIPLTKE…FIEGRIQELQ (67 aa)).

Belongs to the GreA/GreB family.

Its function is as follows. Necessary for efficient RNA polymerase transcription elongation past template-encoded arresting sites. The arresting sites in DNA have the property of trapping a certain fraction of elongating RNA polymerases that pass through, resulting in locked ternary complexes. Cleavage of the nascent transcript by cleavage factors such as GreA or GreB allows the resumption of elongation from the new 3'terminus. GreA releases sequences of 2 to 3 nucleotides. This is Transcription elongation factor GreA from Trichlorobacter lovleyi (strain ATCC BAA-1151 / DSM 17278 / SZ) (Geobacter lovleyi).